Reading from the N-terminus, the 174-residue chain is CASP-like protein 1 (174 aa).

A disordered region spans residues Met1–Thr25. Over Met1 to Gly46 the chain is Cytoplasmic. Positions Ser8–Asn18 are enriched in polar residues. The helical transmembrane segment at Val47 to Ala67 threads the bilayer. The Extracellular segment spans residues Thr68–Thr96. The helical transmembrane segment at Phe97–Ile117 threads the bilayer. The Cytoplasmic segment spans residues Ala118–Thr119. The chain crosses the membrane as a helical span at residues Ile120–Phe139. The Extracellular portion of the chain corresponds to Asn140 to Val150. The helical transmembrane segment at Val151 to Ile171 threads the bilayer. At Arg172 to His174 the chain is on the cytoplasmic side.

This sequence belongs to the Casparian strip membrane proteins (CASP) family. Homodimer and heterodimers.

The protein resides in the cell membrane. The chain is CASP-like protein 1 from Triphysaria pusilla (Dwarf owl's-clover).